We begin with the raw amino-acid sequence, 314 residues long: Nitrilase 2 (314 aa).

The 263-residue stretch at 7-269 folds into the CN hydrolase domain; the sequence is VTLGVAQAAP…ETLITARVST (263 aa). The active-site Proton acceptor is E47. The active-site Proton donor is the K132. The active-site Nucleophile is C166.

It belongs to the carbon-nitrogen hydrolase superfamily. Nitrilase family.

It catalyses the reaction a nitrile + 2 H2O = a carboxylate + NH4(+). Nitrilases catalyze the mild hydrolytic conversion of organonitriles directly to the corresponding carboxylic acids. Catalyzes the production of aryllactic acid derivatives. Mediates the hydrolysis of cyanohydrin to (S)-phenyllactic acid. This Unknown prokaryotic organism protein is Nitrilase 2.